A 684-amino-acid chain; its full sequence is Threonine--tRNA ligase (684 aa).

The region spanning 1–66 (MTVPATDSWP…DTDAEVVPVA (66 aa)) is the TGS domain. The tract at residues 261 to 567 (DHRKLGSELD…LTEHYAGAFP (307 aa)) is catalytic. Positions 366, 417, and 544 each coordinate Zn(2+).

Belongs to the class-II aminoacyl-tRNA synthetase family. Homodimer. Requires Zn(2+) as cofactor.

The protein localises to the cytoplasm. The catalysed reaction is tRNA(Thr) + L-threonine + ATP = L-threonyl-tRNA(Thr) + AMP + diphosphate + H(+). Its function is as follows. Catalyzes the attachment of threonine to tRNA(Thr) in a two-step reaction: L-threonine is first activated by ATP to form Thr-AMP and then transferred to the acceptor end of tRNA(Thr). Also edits incorrectly charged L-seryl-tRNA(Thr). The polypeptide is Threonine--tRNA ligase (Mycobacterium avium (strain 104)).